Here is a 449-residue protein sequence, read N- to C-terminus: Trigger factor (449 aa).

The 86-residue stretch at 169 to 254 (GDRITVDFVG…AKQVEAPGEL (86 aa)) folds into the PPIase FKBP-type domain.

Belongs to the FKBP-type PPIase family. Tig subfamily.

The protein localises to the cytoplasm. It catalyses the reaction [protein]-peptidylproline (omega=180) = [protein]-peptidylproline (omega=0). In terms of biological role, involved in protein export. Acts as a chaperone by maintaining the newly synthesized protein in an open conformation. Functions as a peptidyl-prolyl cis-trans isomerase. This is Trigger factor from Azorhizobium caulinodans (strain ATCC 43989 / DSM 5975 / JCM 20966 / LMG 6465 / NBRC 14845 / NCIMB 13405 / ORS 571).